The primary structure comprises 100 residues: Urease subunit gamma (100 aa).

The protein belongs to the urease gamma subunit family. Heterotrimer of UreA (gamma), UreB (beta) and UreC (alpha) subunits. Three heterotrimers associate to form the active enzyme.

The protein resides in the cytoplasm. The catalysed reaction is urea + 2 H2O + H(+) = hydrogencarbonate + 2 NH4(+). Its pathway is nitrogen metabolism; urea degradation; CO(2) and NH(3) from urea (urease route): step 1/1. This chain is Urease subunit gamma, found in Bacillus sp. (strain TB-90).